Here is a 90-residue protein sequence, read N- to C-terminus: Cell division protein CrgA (90 aa).

The tract at residues 1–25 (MPKARVTKNETAPVSSNPSANRTPV) is disordered. Residues 9–22 (NETAPVSSNPSANR) show a composition bias toward polar residues. 2 consecutive transmembrane segments (helical) span residues 38 to 58 (VIMF…YLVG) and 67 to 87 (LGAW…LMTM).

Belongs to the CrgA family.

It localises to the cell membrane. In terms of biological role, involved in cell division. This chain is Cell division protein CrgA, found in Corynebacterium glutamicum (strain R).